Here is a 714-residue protein sequence, read N- to C-terminus: Phosphate acetyltransferase (714 aa).

The phosphate acetyltransferase stretch occupies residues 390-714 (AFRYQLTELA…TAIQASQQQQ (325 aa)).

This sequence in the N-terminal section; belongs to the CobB/CobQ family. The protein in the C-terminal section; belongs to the phosphate acetyltransferase and butyryltransferase family. Homohexamer.

It is found in the cytoplasm. It carries out the reaction acetyl-CoA + phosphate = acetyl phosphate + CoA. The enzyme catalyses propanoyl-CoA + phosphate = propanoyl phosphate + CoA. The protein operates within metabolic intermediate biosynthesis; acetyl-CoA biosynthesis; acetyl-CoA from acetate: step 2/2. Allosterically inhibited by NADH. Functionally, involved in acetate metabolism. Catalyzes the reversible interconversion of acetyl-CoA and acetyl phosphate. The direction of the overall reaction changes depending on growth conditions. Required for acetate recapture but not for acetate excretion when this organism is grown on ethanolamine (EA); is unable to complement an eutD deletion during growth on EA. Works with proprionate kinase PduW to capture exogenous propionate and regenerate propionyl-CoA during degradation of propionate and 1,2-propanediol (1,2-PD). The protein is Phosphate acetyltransferase (pta) of Salmonella typhimurium (strain LT2 / SGSC1412 / ATCC 700720).